Consider the following 433-residue polypeptide: 23S rRNA (uracil(1939)-C(5))-methyltransferase RlmD (433 aa).

The region spanning 10 to 68 (RTTTRQIITVSVNDLDSFGQGVARHNGKTLFIPGLLSQENAEVTVTEDKKQYARAKVVR) is the TRAM domain. [4Fe-4S] cluster contacts are provided by C81, C87, C90, and C162. Q265, F294, N299, E315, N342, and D363 together coordinate S-adenosyl-L-methionine. C389 functions as the Nucleophile in the catalytic mechanism.

Belongs to the class I-like SAM-binding methyltransferase superfamily. RNA M5U methyltransferase family. RlmD subfamily.

It catalyses the reaction uridine(1939) in 23S rRNA + S-adenosyl-L-methionine = 5-methyluridine(1939) in 23S rRNA + S-adenosyl-L-homocysteine + H(+). Functionally, catalyzes the formation of 5-methyl-uridine at position 1939 (m5U1939) in 23S rRNA. The sequence is that of 23S rRNA (uracil(1939)-C(5))-methyltransferase RlmD from Shigella dysenteriae serotype 1 (strain Sd197).